We begin with the raw amino-acid sequence, 547 residues long: MNKLIRRAVTIFAVTSVASLFASGVLETSMAESLSTNVISLADTKAKDNTSHKSKKARKNHSKETPVDRKEVAPVHESKATGPKQDSCFGRMYTVKVNDDRNVEITQAVPEYATVGSPYPIEITATGKRDCVDVIITQQLPCEAEFVRSDPATTPTADGKLVWKIDRLGQGEKSKITVWVKPLKEGCCFTAATVCACPEIRSVTKCGQPAICVKQEGPENACLRCPVVYKINVVNQGTATARNVVVENPVPDGYAHSSGQRVLTFTLGDMQPGEHRTITVEFCPLKRGRATNIATVSYCGGHKNTASVTTVINEPCVQVSIAGADWSYVCKPVEYVISVSNPGDLVLRDVVVEDTLSPGVTVLEAAGAQISCNKVVWTVKELNPGESLQYKVLVRAQTPGQFTNNVVVKSCSDCGTCTSCAEATTYWKGVAATHMCVVDTCDPVCVGENTVYRICVTNRGSAEDTNVSLMLKFSKELQPVSFSGPTKGTITGNTVVFDSLPRLGSKETVEFSVTLKAVSAGDARGEAILSSDTLTVPVSDTENTHIY.

A signal peptide spans 1-22 (MNKLIRRAVTIFAVTSVASLFA). Residues 23–40 (SGVLETSMAESLSTNVIS) constitute a propeptide that is removed on maturation. A disordered region spans residues 45–84 (KAKDNTSHKSKKARKNHSKETPVDRKEVAPVHESKATGPK). A compositionally biased stretch (basic residues) spans 52–61 (HKSKKARKNH). Residues 62–79 (SKETPVDRKEVAPVHESK) are compositionally biased toward basic and acidic residues.

Part of a disulfide cross-linked outer membrane complex (COMC) composed of the major outer membrane porin (MOMP), the small cysteine-rich protein (OmcA) and the large cysteine-rich periplasmic protein (OmcB).

It localises to the periplasm. In terms of biological role, in elementary bodies (EBs, the infectious stage, which is able to survive outside the host cell) provides the structural integrity of the outer envelope through disulfide cross-links with the small cysteine-rich protein and the major outer membrane porin. It has been described in publications as the Sarkosyl-insoluble COMC (Chlamydia outer membrane complex), and serves as the functional equivalent of peptidoglycan. The polypeptide is Large cysteine-rich periplasmic protein OmcB, serovar C (omcB) (Chlamydia trachomatis).